The following is a 331-amino-acid chain: MGRLILEHTLQGHKGRIWGVAWHPKGNSFASCGEDKAIRIWSQSGNTWTTKTILSDGHKRTIREVRWSPCGEYLASASFDATTAIWSKHECNATLEGHENEVKSVSWSQSGGLLATCSRDKSVWIWEVAGDDEFECAAVLNAHTQDVKRVVWHPSKEILASASYDNTIKMYAESALDSDWDCTATLSSHTSTVWSIDFEADGERLVSCSDDTTLKIWRAYHPGNEAGIATPDKTTVWKCVCTVAGQHSRAVYDVSWCKLTGLIASACGDDGIRIFKESSDSKRDEPTFELLTAEESAHEQDVNAVEWNPVTAGQLISCSDDGTIKIWKLQE.

WD repeat units lie at residues 12–51 (GHKG…WTTK), 57–96 (GHKR…ATLE), 97–136 (GHEN…EFEC), 142–181 (AHTQ…SDWD), 188–227 (SHTS…NEAG), 246–285 (QHSR…KRDE), and 297–331 (AHEQ…KLQE).

Belongs to the WD repeat CIA1 family.

Essential component of the cytosolic iron-sulfur (Fe/S) protein assembly machinery. Required for the maturation of extramitochondrial Fe/S proteins. The polypeptide is Probable cytosolic iron-sulfur protein assembly protein Ciao1 (Drosophila grimshawi (Hawaiian fruit fly)).